The sequence spans 503 residues: Dentin matrix acidic phosphoprotein 1 (503 aa).

The N-terminal stretch at 1-16 (MKTVILLVFLWGLSCA) is a signal peptide. Positions 23–35 (HNTESESSEERTG) are enriched in basic and acidic residues. Positions 23-503 (HNTESESSEE…QDDNDCQDGY (481 aa)) are disordered. Residues 54 to 63 (QASPEGQANS) show a composition bias toward polar residues. Residues 98-119 (KEDDEDDSGDDTFGDEDNDLGP) show a composition bias toward acidic residues. Over residues 138-150 (DTTQSSEDSTSQE) the composition is skewed to low complexity. A compositionally biased stretch (basic and acidic residues) spans 158–175 (SDSKDHDSEDEADSRPEA). Residues 203–215 (SEFDDEGMQSDDP) show a composition bias toward acidic residues. Basic and acidic residues-rich tracts occupy residues 233–243 (RSEESKGDHEP), 267–286 (HVSE…RETQ), and 293–303 (TASKEESRSES). Residues 332-348 (EPSQESSSESQEGVTSE) are compositionally biased toward low complexity. The Cell attachment site signature appears at 350–352 (RGD). A glycan (N-linked (GlcNAc...) asparagine) is linked at asparagine 356. Over residues 362–373 (DQEDSESSEEDS) the composition is skewed to acidic residues. N-linked (GlcNAc...) asparagine glycosylation occurs at asparagine 394. Polar residues predominate over residues 407-418 (AQDGDSSSQEGL). Residues 419 to 435 (QSQSASTESRSQESQSE) show a composition bias toward low complexity. Asparagine 457 carries an N-linked (GlcNAc...) asparagine glycan. Basic and acidic residues predominate over residues 467 to 492 (EDIRPKNMEADSRKLIVDAYHNKPIG). Residues 493–503 (DQDDNDCQDGY) are compositionally biased toward acidic residues.

As to quaternary structure, interacts with importin alpha. Phosphorylated in the cytosol and extracellular matrix and unphosphorylated in the nucleus. Phosphorylation is necessary for nucleocytoplasmic transport and may be catalyzed by a nuclear isoform of CK2 and can be augmented by calcium. Phosphorylated (in vitro) by FAM20C in the extracellular medium at sites within the S-x-E/pS motif. Expressed in tooth particularly in odontoblast, ameloblast and cementoblast. Also expressed in bone particularly in osteoblast.

The protein localises to the nucleus. It localises to the cytoplasm. Its subcellular location is the secreted. The protein resides in the extracellular space. It is found in the extracellular matrix. Functionally, may have a dual function during osteoblast differentiation. In the nucleus of undifferentiated osteoblasts, unphosphorylated form acts as a transcriptional component for activation of osteoblast-specific genes like osteocalcin. During the osteoblast to osteocyte transition phase it is phosphorylated and exported into the extracellular matrix, where it regulates nucleation of hydroxyapatite. The protein is Dentin matrix acidic phosphoprotein 1 of Mus musculus (Mouse).